Reading from the N-terminus, the 299-residue chain is Plasmodesmata-located protein 5 (299 aa).

The first 25 residues, 1-25 (MIKTKTTSLLCFLLTAVILMNPSSS), serve as a signal peptide directing secretion. At 26–264 (SPTDNYIYAV…NKDDNGVGKT (239 aa)) the chain is on the extracellular side. Gnk2-homologous domains are found at residues 29–135 (DNYI…NKSF) and 137–237 (GVQD…VGGS). 6 cysteine pairs are disulfide-bonded: Cys36–Cys113, Cys89–Cys98, Cys101–Cys126, Cys148–Cys215, Cys191–Cys200, and Cys203–Cys228. A helical membrane pass occupies residues 265-285 (LAIIIGIVTLIILLVVFLAFV). The necessary and sufficient for plasmodesmal targeting stretch occupies residues 265–285 (LAIIIGIVTLIILLVVFLAFV). Residues 286–299 (GKCCRKLQDEKWCK) are Cytoplasmic-facing.

Belongs to the cysteine-rich repeat secretory protein family. Plasmodesmata-located proteins (PDLD) subfamily. Monomer. Interacts with PDLP1. As to quaternary structure, (Microbial infection) Interacts with Grapevine fanleaf virus (GFLV) 2B-MP. Highly expressed in inflorescence nodes and rosette senescent leaves. Mostly expressed in cell wall junctions between leaf epidermal and mesophyl cells, and to a lesser extent at the cross walls between epidermal or cortex cells within the hypocotyl (at protein level). Low vascular expression in seedling and mature leaf, but high expression in senescing leaves (at protein level).

It localises to the cell membrane. The protein resides in the cell junction. Its subcellular location is the plasmodesma. Functionally, modulates cell-to-cell trafficking. Has a positive role in innate immunity. Required for systemic acquired resistance (SAR) which is mediated by the signaling molecules azelaic acid (AzA), glycerol-3-phosphate (G3P), and salicylic acid (SA). Negative regulator of plasmodesmata permeability triggered by SA during immune responses, through regulation of callose deposition. Delays the trafficking of Tobacco Mosaic Virus (TMV) movement protein (MP). Required for symplastic signal transport. The chain is Plasmodesmata-located protein 5 from Arabidopsis thaliana (Mouse-ear cress).